The chain runs to 224 residues: Uracil-DNA glycosylase (224 aa).

Residue D64 is the Proton acceptor of the active site.

This sequence belongs to the uracil-DNA glycosylase (UDG) superfamily. UNG family.

The protein resides in the cytoplasm. It carries out the reaction Hydrolyzes single-stranded DNA or mismatched double-stranded DNA and polynucleotides, releasing free uracil.. Excises uracil residues from the DNA which can arise as a result of misincorporation of dUMP residues by DNA polymerase or due to deamination of cytosine. The sequence is that of Uracil-DNA glycosylase from Clostridioides difficile (strain 630) (Peptoclostridium difficile).